Here is a 284-residue protein sequence, read N- to C-terminus: GPN-loop GTPase 3 (284 aa).

Residue 13 to 18 participates in GTP binding; sequence GSGKST. Positions 72-74 match the Gly-Pro-Asn (GPN)-loop; involved in dimer interface motif; sequence GPN. Residue 174-177 coordinates GTP; that stretch reads TKMD. The interval 262–284 is disordered; it reads EPREHEEESSSMFDEYFQERQNE.

It belongs to the GPN-loop GTPase family. Heterodimer with GPN1. Binds to RNA polymerase II (RNAPII). Interacts directly with subunits RPB4 and RPB7 and the CTD of RPB1.

In terms of biological role, small GTPase required for proper localization of RNA polymerase II (RNAPII). May act at an RNAP assembly step prior to nuclear import. In Mus musculus (Mouse), this protein is GPN-loop GTPase 3.